The primary structure comprises 148 residues: Azurin (148 aa).

The N-terminal stretch at 1–20 is a signal peptide; it reads MLRKLAAVSLLSLLSAPLLA. One can recognise a Plastocyanin-like domain in the interval 21-148; that stretch reads AECSVDIQGN…ALMKGTLTLK (128 aa). A disulfide bridge connects residues Cys-23 and Cys-46. Cu cation-binding residues include His-66, Cys-132, His-137, and Met-141.

The protein resides in the periplasm. Transfers electrons from cytochrome c551 to cytochrome oxidase. This is Azurin (azu) from Pseudomonas aeruginosa (strain ATCC 15692 / DSM 22644 / CIP 104116 / JCM 14847 / LMG 12228 / 1C / PRS 101 / PAO1).